Here is a 1029-residue protein sequence, read N- to C-terminus: Myosin phosphatase Rho-interacting protein (1029 aa).

An interaction with F-actin region spans residues Met1–Thr387. In terms of domain architecture, PH 1 spans Lys43–Arg150. Residues Asn152–Val267 form a disordered region. Low complexity predominate over residues Ser179 to Ser195. A phosphoserine mark is found at Ser198, Ser224, Ser226, Ser230, and Ser232. Positions Ser226–Pro237 are enriched in low complexity. Positions Thr245 to Val267 are enriched in basic and acidic residues. Phosphoserine occurs at positions 271, 275, 294, and 297. 2 disordered regions span residues Ala279 to Ser306 and Pro333 to Glu383. A Phosphothreonine modification is found at Thr300. A compositionally biased stretch (basic and acidic residues) spans Arg338–Ala354. The residue at position 369 (Ser369) is a Phosphoserine. A PH 2 domain is found at Leu391–Leu487. Residues Ser490–Ala614 are disordered. Positions Pro492 to Asp509 are enriched in polar residues. Position 497 is a phosphoserine (Ser497). Residues Pro527–Glu550 show a composition bias toward basic and acidic residues. The interval Glu550–Ser828 is interaction with RHOA. Residues Arg562–Ser571 show a composition bias toward polar residues. The segment covering Glu583 to Arg592 has biased composition (basic and acidic residues). At Ser622 the chain carries Phosphoserine. Thr650 carries the phosphothreonine modification. A coiled-coil region spans residues Ser675–Glu979. A Phosphoserine modification is found at Ser804. The segment at Ser828–Leu883 is interaction with PPP1R12A. Phosphoserine is present on residues Ser981, Ser997, Ser1018, and Ser1020.

As to quaternary structure, binds RHOA, PPP1R12A/MBS and PPP1R12C/MBS85 through adjacent coiled coil domains. Interacts with MYZAP. Binds F-actin through its N-terminus.

The protein resides in the cytoplasm. It is found in the cytoskeleton. Targets myosin phosphatase to the actin cytoskeleton. Required for the regulation of the actin cytoskeleton by RhoA and ROCK1. Depletion leads to an increased number of stress fibers in smooth muscle cells through stabilization of actin fibers by phosphorylated myosin. Overexpression of MRIP as well as its F-actin-binding region leads to disassembly of stress fibers in neuronal cells. The chain is Myosin phosphatase Rho-interacting protein (Mprip) from Rattus norvegicus (Rat).